A 238-amino-acid chain; its full sequence is Ribitol-5-phosphate cytidylyltransferase (238 aa).

CTP is bound by residues 7-10 (LAGG) and 81-87 (GDDRNHT).

Belongs to the IspD/TarI cytidylyltransferase family. TarI subfamily.

It carries out the reaction D-ribitol 5-phosphate + CTP + H(+) = CDP-L-ribitol + diphosphate. The protein operates within cell wall biogenesis; poly(ribitol phosphate) teichoic acid biosynthesis. Functionally, catalyzes the transfer of the cytidylyl group of CTP to D-ribitol 5-phosphate. The protein is Ribitol-5-phosphate cytidylyltransferase of Staphylococcus epidermidis (strain ATCC 35984 / DSM 28319 / BCRC 17069 / CCUG 31568 / BM 3577 / RP62A).